Reading from the N-terminus, the 384-residue chain is Tryptophan--tRNA ligase (384 aa).

The 'HIGH' region motif lies at 81-89; that stretch reads PSGPMHIGH. The 'KMSKS' region signature appears at 252-256; that stretch reads KMSAS.

It belongs to the class-I aminoacyl-tRNA synthetase family.

It is found in the cytoplasm. It carries out the reaction tRNA(Trp) + L-tryptophan + ATP = L-tryptophyl-tRNA(Trp) + AMP + diphosphate + H(+). The protein is Tryptophan--tRNA ligase of Thermococcus sibiricus (strain DSM 12597 / MM 739).